The chain runs to 190 residues: Superoxide dismutase [Cu-Zn] (190 aa).

Residues 1–23 form the signal peptide; the sequence is MKLTNLALAFTLFGASAVAFAHA. Residues histidine 83, histidine 85, and histidine 108 each contribute to the Cu cation site. Cysteine 90 and cysteine 186 are oxidised to a cystine. Histidine 108, histidine 117, histidine 126, and aspartate 129 together coordinate Zn(2+). Positions 162-181 are disordered; sequence MIHEGGDNHSDHPAPLGGGG. Residue histidine 164 participates in Cu cation binding.

This sequence belongs to the Cu-Zn superoxide dismutase family. As to quaternary structure, homodimer. It depends on Cu cation as a cofactor. The cofactor is Zn(2+).

It localises to the periplasm. The catalysed reaction is 2 superoxide + 2 H(+) = H2O2 + O2. Functionally, destroys radicals which are normally produced within the cells and which are toxic to biological systems. The polypeptide is Superoxide dismutase [Cu-Zn] (sodC) (Actinobacillus pleuropneumoniae (Haemophilus pleuropneumoniae)).